Here is a 122-residue protein sequence, read N- to C-terminus: Large ribosomal subunit protein uL14 (122 aa).

The protein belongs to the universal ribosomal protein uL14 family. Part of the 50S ribosomal subunit. Forms a cluster with proteins L3 and L19. In the 70S ribosome, L14 and L19 interact and together make contacts with the 16S rRNA in bridges B5 and B8.

Functionally, binds to 23S rRNA. Forms part of two intersubunit bridges in the 70S ribosome. In Alkaliphilus oremlandii (strain OhILAs) (Clostridium oremlandii (strain OhILAs)), this protein is Large ribosomal subunit protein uL14.